A 94-amino-acid polypeptide reads, in one-letter code: Co-chaperonin GroES (94 aa).

It belongs to the GroES chaperonin family. As to quaternary structure, heptamer of 7 subunits arranged in a ring. Interacts with the chaperonin GroEL.

The protein localises to the cytoplasm. In terms of biological role, together with the chaperonin GroEL, plays an essential role in assisting protein folding. The GroEL-GroES system forms a nano-cage that allows encapsulation of the non-native substrate proteins and provides a physical environment optimized to promote and accelerate protein folding. GroES binds to the apical surface of the GroEL ring, thereby capping the opening of the GroEL channel. The protein is Co-chaperonin GroES of Clostridium botulinum (strain Eklund 17B / Type B).